Here is a 70-residue protein sequence, read N- to C-terminus: Protein SlyX homolog (70 aa).

Belongs to the SlyX family.

The chain is Protein SlyX homolog from Shewanella baltica (strain OS155 / ATCC BAA-1091).